The sequence spans 237 residues: Uridylate kinase (237 aa).

12 to 15 provides a ligand contact to ATP; it reads KLSG. Residues 20 to 25 are involved in allosteric activation by GTP; the sequence is GEDGLG. Glycine 54 provides a ligand contact to UMP. ATP contacts are provided by glycine 55 and arginine 59. Residues aspartate 74 and 135–142 contribute to the UMP site; that span reads TGNPFFTT. Residues threonine 162, tyrosine 168, and aspartate 171 each coordinate ATP.

This sequence belongs to the UMP kinase family. As to quaternary structure, homohexamer.

The protein localises to the cytoplasm. It catalyses the reaction UMP + ATP = UDP + ADP. It functions in the pathway pyrimidine metabolism; CTP biosynthesis via de novo pathway; UDP from UMP (UMPK route): step 1/1. Allosterically activated by GTP. Inhibited by UTP. In terms of biological role, catalyzes the reversible phosphorylation of UMP to UDP. The chain is Uridylate kinase (pyrH) from Haemophilus influenzae (strain ATCC 51907 / DSM 11121 / KW20 / Rd).